The primary structure comprises 283 residues: Nucleoid occlusion protein (283 aa).

The disordered stretch occupies residues 1-21; the sequence is MKHSFSRFFGFGEKEEEPEIA. Positions 148 to 167 form a DNA-binding region, H-T-H motif; it reads EALAQRLGKGQSTIANKLRL.

This sequence belongs to the ParB family.

Its subcellular location is the cytoplasm. It localises to the nucleoid. Its function is as follows. Effects nucleoid occlusion by binding relatively nonspecifically to DNA and preventing the assembly of the division machinery in the vicinity of the nucleoid, especially under conditions that disturb the cell cycle. It helps to coordinate cell division and chromosome segregation by preventing the formation of the Z ring through the nucleoid, which would cause chromosome breakage. This is Nucleoid occlusion protein from Bacillus velezensis (strain DSM 23117 / BGSC 10A6 / LMG 26770 / FZB42) (Bacillus amyloliquefaciens subsp. plantarum).